Consider the following 193-residue polypeptide: ATP-dependent Clp protease proteolytic subunit (193 aa).

The active-site Nucleophile is the Ser-98. His-123 is an active-site residue.

This sequence belongs to the peptidase S14 family. In terms of assembly, fourteen ClpP subunits assemble into 2 heptameric rings which stack back to back to give a disk-like structure with a central cavity, resembling the structure of eukaryotic proteasomes.

Its subcellular location is the cytoplasm. It catalyses the reaction Hydrolysis of proteins to small peptides in the presence of ATP and magnesium. alpha-casein is the usual test substrate. In the absence of ATP, only oligopeptides shorter than five residues are hydrolyzed (such as succinyl-Leu-Tyr-|-NHMec, and Leu-Tyr-Leu-|-Tyr-Trp, in which cleavage of the -Tyr-|-Leu- and -Tyr-|-Trp bonds also occurs).. In terms of biological role, cleaves peptides in various proteins in a process that requires ATP hydrolysis. Has a chymotrypsin-like activity. Plays a major role in the degradation of misfolded proteins. In Haemophilus influenzae (strain PittEE), this protein is ATP-dependent Clp protease proteolytic subunit.